A 476-amino-acid chain; its full sequence is Glutamate--tRNA ligase 1 (476 aa).

A 'HIGH' region motif is present at residues 9 to 19 (PSPTGFLHIGG). Residues 238 to 242 (KLSKR) carry the 'KMSKS' region motif. Lysine 241 is a binding site for ATP.

Belongs to the class-I aminoacyl-tRNA synthetase family. Glutamate--tRNA ligase type 1 subfamily. As to quaternary structure, monomer.

It localises to the cytoplasm. The enzyme catalyses tRNA(Glu) + L-glutamate + ATP = L-glutamyl-tRNA(Glu) + AMP + diphosphate. In terms of biological role, catalyzes the attachment of glutamate to tRNA(Glu) in a two-step reaction: glutamate is first activated by ATP to form Glu-AMP and then transferred to the acceptor end of tRNA(Glu). This chain is Glutamate--tRNA ligase 1, found in Bartonella bacilliformis (strain ATCC 35685 / KC583 / Herrer 020/F12,63).